The following is a 180-amino-acid chain: ADP-ribosylation factor 4 (180 aa).

A lipid anchor (N-myristoyl glycine) is attached at G2. GTP contacts are provided by residues 24–31 (GLDAAGKT), 67–71 (DVGGQ), and 126–129 (NKQD). S147 carries the post-translational modification Phosphoserine.

It belongs to the small GTPase superfamily. Arf family. Forms a complex containing RAB11A, ASAP1, RAB3IP, RAP11FIP3 and ARF4; the complex promotes preciliary trafficking; the complex binds to RHO in photoreceptor cells and promotes RHO ciliary transport.

It localises to the golgi apparatus. It is found in the membrane. In terms of biological role, GTP-binding protein that functions as an allosteric activator of the cholera toxin catalytic subunit, an ADP-ribosyltransferase. Involved in protein trafficking; may modulate vesicle budding and uncoating within the Golgi apparatus. Part of the ciliary targeting complex containing Rab11, ASAP1, Rabin8/RAB3IP, RAB11FIP3 and ARF4, which direct preciliary vesicle trafficking to mother centriole and ciliogenesis initiation. The sequence is that of ADP-ribosylation factor 4 (ARF4) from Bos taurus (Bovine).